A 54-amino-acid polypeptide reads, in one-letter code: Ovomucoid (54 aa).

Residues 4–54 (VDCSDYPKPVCSLEYMPLCGSDSKTYSNKCDFCNAFVDSNGTLSLSHFGKC) enclose the Kazal-like domain. Intrachain disulfides connect Cys6-Cys36, Cys14-Cys33, and Cys22-Cys54. N-linked (GlcNAc...) asparagine glycosylation occurs at Asn43.

The protein localises to the secreted. The polypeptide is Ovomucoid (Circus aeruginosus (Western marsh harrier)).